The primary structure comprises 562 residues: Arginine--tRNA ligase (562 aa).

Residues 129–139 (ANPTGPLHVGH) carry the 'HIGH' region motif.

This sequence belongs to the class-I aminoacyl-tRNA synthetase family. In terms of assembly, monomer.

It is found in the cytoplasm. It carries out the reaction tRNA(Arg) + L-arginine + ATP = L-arginyl-tRNA(Arg) + AMP + diphosphate. The chain is Arginine--tRNA ligase from Xanthomonas oryzae pv. oryzae (strain KACC10331 / KXO85).